Reading from the N-terminus, the 331-residue chain is Adenosine deaminase (331 aa).

Residues His12 and His14 each coordinate Zn(2+). Residues His14, Asp16, and Gly170 each coordinate substrate. His197 contacts Zn(2+). Catalysis depends on Glu200, which acts as the Proton donor. Zn(2+) is bound at residue Asp278. Asp279 contributes to the substrate binding site.

The protein belongs to the metallo-dependent hydrolases superfamily. Adenosine and AMP deaminases family. Adenosine deaminase subfamily. Zn(2+) serves as cofactor.

The enzyme catalyses adenosine + H2O + H(+) = inosine + NH4(+). It carries out the reaction 2'-deoxyadenosine + H2O + H(+) = 2'-deoxyinosine + NH4(+). Functionally, catalyzes the hydrolytic deamination of adenosine and 2-deoxyadenosine. The chain is Adenosine deaminase from Shewanella baltica (strain OS155 / ATCC BAA-1091).